We begin with the raw amino-acid sequence, 341 residues long: Ferrochelatase (341 aa).

The Fe cation site is built by His210 and Glu291.

This sequence belongs to the ferrochelatase family.

The protein localises to the cytoplasm. It carries out the reaction heme b + 2 H(+) = protoporphyrin IX + Fe(2+). The protein operates within porphyrin-containing compound metabolism; protoheme biosynthesis; protoheme from protoporphyrin-IX: step 1/1. Its function is as follows. Catalyzes the ferrous insertion into protoporphyrin IX. This is Ferrochelatase from Alcanivorax borkumensis (strain ATCC 700651 / DSM 11573 / NCIMB 13689 / SK2).